Reading from the N-terminus, the 420-residue chain is Hemocyanin 2-c chain (420 aa).

Residues 1-12 are compositionally biased toward basic residues; sequence DFGHSKKIRKNV. The segment at 1–20 is disordered; it reads DFGHSKKIRKNVHSLTAEEQ. A Cu cation-binding site is contributed by His46. Residues Cys52 and Cys63 are joined by a disulfide bond. Positions 66, 73, 185, 189, and 216 each coordinate Cu cation. Cystine bridges form between Cys175–Cys242 and Cys335–Cys342.

O-glycosylated. In terms of tissue distribution, hemolymph.

It is found in the secreted. The protein localises to the extracellular space. In terms of biological role, hemocyanins are copper-containing oxygen carriers occurring freely dissolved in the hemolymph of many mollusks and arthropods. The chain is Hemocyanin 2-c chain from Megathura crenulata (Giant keyhole limpet).